A 262-amino-acid polypeptide reads, in one-letter code: Phosphatidylglycerol--prolipoprotein diacylglyceryl transferase (262 aa).

Transmembrane regions (helical) follow at residues 9–29 (LGPL…ILAV), 41–61 (IIPD…ILGA), 80–100 (IFAI…GALV), and 109–129 (LINT…AQSL). A 1,2-diacyl-sn-glycero-3-phospho-(1'-sn-glycerol) is bound at residue Arg-131. Helical transmembrane passes span 167–187 (QPTF…ILIF), 197–217 (GHIT…IEGM), and 226–246 (GLRV…MIVI).

It belongs to the Lgt family.

The protein resides in the cell membrane. The catalysed reaction is L-cysteinyl-[prolipoprotein] + a 1,2-diacyl-sn-glycero-3-phospho-(1'-sn-glycerol) = an S-1,2-diacyl-sn-glyceryl-L-cysteinyl-[prolipoprotein] + sn-glycerol 1-phosphate + H(+). The protein operates within protein modification; lipoprotein biosynthesis (diacylglyceryl transfer). Its function is as follows. Catalyzes the transfer of the diacylglyceryl group from phosphatidylglycerol to the sulfhydryl group of the N-terminal cysteine of a prolipoprotein, the first step in the formation of mature lipoproteins. This Streptococcus pneumoniae (strain Taiwan19F-14) protein is Phosphatidylglycerol--prolipoprotein diacylglyceryl transferase.